Here is a 134-residue protein sequence, read N- to C-terminus: ATP synthase epsilon chain (134 aa).

The protein belongs to the ATPase epsilon chain family. In terms of assembly, F-type ATPases have 2 components, CF(1) - the catalytic core - and CF(0) - the membrane proton channel. CF(1) has five subunits: alpha(3), beta(3), gamma(1), delta(1), epsilon(1). CF(0) has three main subunits: a, b and c.

The protein localises to the cell membrane. Its function is as follows. Produces ATP from ADP in the presence of a proton gradient across the membrane. The sequence is that of ATP synthase epsilon chain from Ruminiclostridium cellulolyticum (strain ATCC 35319 / DSM 5812 / JCM 6584 / H10) (Clostridium cellulolyticum).